The primary structure comprises 174 residues: Protein RESISTANCE TO POWDERY MILDEW 8.2 (174 aa).

Positions 1–153 constitute an RPW8 domain; sequence MIAEVAAGGA…IMPQPKFEIH (153 aa). The helical transmembrane segment at 7-23 threads the bilayer; it reads AGGALGLALSVLHEAVK. Residues 68–145 adopt a coiled-coil conformation; the sequence is VNKRLKLLLE…EISTKLDKIM (78 aa).

It belongs to the plant RPW8 protein family.

The protein localises to the membrane. Its function is as follows. Disease resistance (R) protein that induces localized, salicylic acid-dependent defenses. Confers resistance to powdery mildew (e.g. Erysiphe cichoracearum UCSC1). The sequence is that of Protein RESISTANCE TO POWDERY MILDEW 8.2 from Arabidopsis thaliana (Mouse-ear cress).